The following is a 344-amino-acid chain: Tetraacyldisaccharide 4'-kinase (344 aa).

65–72 contributes to the ATP binding site; that stretch reads HAGGTGKT.

Belongs to the LpxK family.

It catalyses the reaction a lipid A disaccharide + ATP = a lipid IVA + ADP + H(+). The protein operates within glycolipid biosynthesis; lipid IV(A) biosynthesis; lipid IV(A) from (3R)-3-hydroxytetradecanoyl-[acyl-carrier-protein] and UDP-N-acetyl-alpha-D-glucosamine: step 6/6. Its function is as follows. Transfers the gamma-phosphate of ATP to the 4'-position of a tetraacyldisaccharide 1-phosphate intermediate (termed DS-1-P) to form tetraacyldisaccharide 1,4'-bis-phosphate (lipid IVA). The protein is Tetraacyldisaccharide 4'-kinase of Neisseria meningitidis serogroup B (strain ATCC BAA-335 / MC58).